The primary structure comprises 497 residues: Cobyrinate a,c-diamide synthase (497 aa).

A GATase cobBQ-type domain is found at R273 to E478. C355 serves as the catalytic Nucleophile.

The protein belongs to the CobB/CbiA family. The cofactor is Mg(2+).

The catalysed reaction is cob(II)yrinate + 2 L-glutamine + 2 ATP + 2 H2O = cob(II)yrinate a,c diamide + 2 L-glutamate + 2 ADP + 2 phosphate + 2 H(+). It carries out the reaction Ni-sirohydrochlorin + 2 L-glutamine + 2 ATP + 2 H2O = Ni-sirohydrochlorin a,c-diamide + 2 L-glutamate + 2 ADP + 2 phosphate + 2 H(+). The protein operates within cofactor biosynthesis; adenosylcobalamin biosynthesis; cob(II)yrinate a,c-diamide from sirohydrochlorin (anaerobic route): step 10/10. In terms of biological role, catalyzes the ATP-dependent amidation of the two carboxylate groups at positions a and c of cobyrinate, using either L-glutamine or ammonia as the nitrogen source (Potential). Involved in the biosynthesis of the unique nickel-containing tetrapyrrole coenzyme F430, the prosthetic group of methyl-coenzyme M reductase (MCR), which plays a key role in methanogenesis and anaerobic methane oxidation. Catalyzes the ATP-dependent amidation of the two carboxylate groups at positions a and c of Ni-sirohydrochlorin, using L-glutamine or ammonia as the nitrogen source. The sequence is that of Cobyrinate a,c-diamide synthase from Methanosarcina acetivorans (strain ATCC 35395 / DSM 2834 / JCM 12185 / C2A).